The following is a 148-amino-acid chain: UPF0178 protein BH16190 (148 aa).

Belongs to the UPF0178 family.

In Bartonella henselae (strain ATCC 49882 / DSM 28221 / CCUG 30454 / Houston 1) (Rochalimaea henselae), this protein is UPF0178 protein BH16190.